A 469-amino-acid polypeptide reads, in one-letter code: Argininosuccinate lyase (469 aa).

It belongs to the lyase 1 family. Argininosuccinate lyase subfamily.

Its subcellular location is the cytoplasm. It catalyses the reaction 2-(N(omega)-L-arginino)succinate = fumarate + L-arginine. The protein operates within amino-acid biosynthesis; L-arginine biosynthesis; L-arginine from L-ornithine and carbamoyl phosphate: step 3/3. The chain is Argininosuccinate lyase from Burkholderia cenocepacia (strain HI2424).